We begin with the raw amino-acid sequence, 324 residues long: N-acetylmuramoyl-L-alanine amidase sle1 (324 aa).

The N-terminal stretch at 1–25 (MQKKYITAIIGTTALSALASTHAQA) is a signal peptide. LysM domains are found at residues 27–70 (TTHT…VLKV), 84–127 (TVYT…KLKV), and 147–190 (ATYT…KLKV). A Peptidase C51 domain is found at 200-324 (SNNTRSNGGY…YQVRNYKFIH (125 aa)).

The protein resides in the secreted. The protein localises to the cell surface. The enzyme catalyses Hydrolyzes the link between N-acetylmuramoyl residues and L-amino acid residues in certain cell-wall glycopeptides.. Functionally, peptidoglycan hydrolase involved in the splitting of the septum during cell division. The sequence is that of N-acetylmuramoyl-L-alanine amidase sle1 (sle1) from Staphylococcus epidermidis (strain ATCC 12228 / FDA PCI 1200).